A 154-amino-acid chain; its full sequence is Protein X (154 aa).

Residues 68-117 (PCALRFTSARCMETTVNAHQILPKVLHKRTLGLPAMSTTDLEAYFKDCVF) are mitochondrial targeting sequence.

Belongs to the orthohepadnavirus protein X family. In terms of assembly, may form homodimer. May interact with host CEBPA, CFLAR, CREB1, DDB1, E4F1, HBXIP, HSPD1/HSP60, NFKBIA, POLR2E and SMAD4. Interacts with host SMC5-SMC6 complex and induces its degradation. Interacts with host TRPC4AP; leading to prevent ubiquitination of TRPC4AP. Interacts with host PLSCR1; this interaction promotes ubiquitination and degradation of HBx and impairs HBx-mediated cell proliferation. A fraction may be phosphorylated in insect cells and HepG2 cells, a human hepatoblastoma cell line. Phosphorylated in vitro by host protein kinase C or mitogen-activated protein kinase. N-acetylated in insect cells.

It localises to the host cytoplasm. The protein localises to the host nucleus. Its subcellular location is the host mitochondrion. Multifunctional protein that plays a role in silencing host antiviral defenses and promoting viral transcription. Does not seem to be essential for HBV infection. May be directly involved in development of cirrhosis and liver cancer (hepatocellular carcinoma). Most of cytosolic activities involve modulation of cytosolic calcium. The effect on apoptosis is controversial depending on the cell types in which the studies have been conducted. May induce apoptosis by localizing in mitochondria and causing loss of mitochondrial membrane potential. May also modulate apoptosis by binding host CFLAR, a key regulator of the death-inducing signaling complex (DISC). Promotes viral transcription by using the host E3 ubiquitin ligase DDB1 to target the SMC5-SMC6 complex to proteasomal degradation. This host complex would otherwise bind to viral episomal DNA, and prevents its transcription. Moderately stimulates transcription of many different viral and cellular transcription elements. Promoters and enhancers stimulated by HBx contain DNA binding sites for NF-kappa-B, AP-1, AP-2, c-EBP, ATF/CREB, or the calcium-activated factor NF-AT. In Homo sapiens (Human), this protein is Protein X.